The chain runs to 286 residues: 33 kDa chaperonin (286 aa).

2 disulfide bridges follow: C233/C235 and C267/C270.

It belongs to the HSP33 family. Under oxidizing conditions two disulfide bonds are formed involving the reactive cysteines. Under reducing conditions zinc is bound to the reactive cysteines and the protein is inactive.

The protein localises to the cytoplasm. Redox regulated molecular chaperone. Protects both thermally unfolding and oxidatively damaged proteins from irreversible aggregation. Plays an important role in the bacterial defense system toward oxidative stress. This is 33 kDa chaperonin from Histophilus somni (strain 2336) (Haemophilus somnus).